A 280-amino-acid chain; its full sequence is 3-methyl-2-oxobutanoate hydroxymethyltransferase (280 aa).

Mg(2+) is bound by residues Asp45 and Asp84. 3-methyl-2-oxobutanoate-binding positions include 45-46 (DS), Asp84, and Lys114. Position 116 (Glu116) interacts with Mg(2+). Glu183 functions as the Proton acceptor in the catalytic mechanism.

The protein belongs to the PanB family. In terms of assembly, homodecamer; pentamer of dimers. The cofactor is Mg(2+).

The protein localises to the cytoplasm. It carries out the reaction 3-methyl-2-oxobutanoate + (6R)-5,10-methylene-5,6,7,8-tetrahydrofolate + H2O = 2-dehydropantoate + (6S)-5,6,7,8-tetrahydrofolate. It functions in the pathway cofactor biosynthesis; (R)-pantothenate biosynthesis; (R)-pantoate from 3-methyl-2-oxobutanoate: step 1/2. Functionally, catalyzes the reversible reaction in which hydroxymethyl group from 5,10-methylenetetrahydrofolate is transferred onto alpha-ketoisovalerate to form ketopantoate. The polypeptide is 3-methyl-2-oxobutanoate hydroxymethyltransferase (Clostridium kluyveri (strain ATCC 8527 / DSM 555 / NBRC 12016 / NCIMB 10680 / K1)).